A 306-amino-acid chain; its full sequence is Ribosomal protein L11 methyltransferase (306 aa).

The S-adenosyl-L-methionine site is built by threonine 154, glycine 179, aspartate 201, and asparagine 242.

It belongs to the methyltransferase superfamily. PrmA family.

Its subcellular location is the cytoplasm. It catalyses the reaction L-lysyl-[protein] + 3 S-adenosyl-L-methionine = N(6),N(6),N(6)-trimethyl-L-lysyl-[protein] + 3 S-adenosyl-L-homocysteine + 3 H(+). Its function is as follows. Methylates ribosomal protein L11. The protein is Ribosomal protein L11 methyltransferase of Stenotrophomonas maltophilia (strain R551-3).